Reading from the N-terminus, the 258-residue chain is Chymotrypsin-like elastase family member 1 (258 aa).

An N-terminal signal peptide occupies residues 1 to 8 (MLVLYGHS). A propeptide spans 9-18 (TQDVPETNAR) (activation peptide). Residues 19 to 256 (VVGGTEARRN…YITWINNVIA (238 aa)) form the Peptidase S1 domain. Cysteine 48 and cysteine 64 are oxidised to a cystine. The active-site Charge relay system is the histidine 63. Ca(2+) contacts are provided by glutamate 77, asparagine 79, glutamine 82, and glutamate 87. N-linked (GlcNAc...) asparagine glycosylation occurs at asparagine 79. The active-site Charge relay system is the aspartate 111. Disulfide bonds link cysteine 145–cysteine 212, cysteine 176–cysteine 192, and cysteine 202–cysteine 232. The Charge relay system role is filled by serine 206. N-linked (GlcNAc...) asparagine glycosylation occurs at asparagine 233.

It belongs to the peptidase S1 family. Elastase subfamily. The cofactor is Ca(2+).

The protein localises to the secreted. It catalyses the reaction Hydrolysis of proteins, including elastin. Preferential cleavage: Ala-|-Xaa.. Functionally, serine proteases that hydrolyze many proteins in addition to elastin. In Canis lupus familiaris (Dog), this protein is Chymotrypsin-like elastase family member 1 (CELA1).